A 78-amino-acid polypeptide reads, in one-letter code: Short neurotoxin SNTX26 (78 aa).

A signal peptide spans 1 to 21; sequence MKTLLLTFLVVTIVCLDLGYT. Intrachain disulfides connect cysteine 24–cysteine 40, cysteine 33–cysteine 58, cysteine 62–cysteine 70, and cysteine 71–cysteine 76.

It belongs to the three-finger toxin family. Short-chain subfamily. In terms of tissue distribution, expressed by the venom gland.

The protein localises to the secreted. In terms of biological role, this three-finger toxin binds and inhibits the nicotinic acetylcholine receptor (nAChR). The chain is Short neurotoxin SNTX26 from Ophiophagus hannah (King cobra).